A 301-amino-acid polypeptide reads, in one-letter code: Nucleotide-binding protein MAB_2783c (301 aa).

24–31 is an ATP binding site; the sequence is GLSGAGRG. A GTP-binding site is contributed by 75–78; sequence DVRS.

The protein belongs to the RapZ-like family.

Its function is as follows. Displays ATPase and GTPase activities. The polypeptide is Nucleotide-binding protein MAB_2783c (Mycobacteroides abscessus (strain ATCC 19977 / DSM 44196 / CCUG 20993 / CIP 104536 / JCM 13569 / NCTC 13031 / TMC 1543 / L948) (Mycobacterium abscessus)).